The chain runs to 485 residues: Zinc finger protein 639 (485 aa).

Over residues 1–14 the composition is skewed to basic residues; it reads MSEYPKKRKRKTLH. Disordered regions lie at residues 1-23 and 54-82; these read MSEY…DSSG and DNKD…SRSQ. A Phosphoserine modification is found at serine 60. Residue lysine 76 forms a Glycyl lysine isopeptide (Lys-Gly) (interchain with G-Cter in SUMO2) linkage. At serine 88 the chain carries Phosphoserine. Residues lysine 177, lysine 181, and lysine 226 each participate in a glycyl lysine isopeptide (Lys-Gly) (interchain with G-Cter in SUMO2) cross-link. 8 C2H2-type zinc fingers span residues 204–227, 233–255, 260–283, 289–311, 374–397, 403–425, 431–454, and 460–482; these read YKCE…ILKH, NVCR…AKLH, YICK…ADTH, YWCE…FQEH, FVCQ…AIEH, HVCD…LNSH, YLCQ…DFKH, and HKCS…LPVH. The interval 371–455 is interaction with CTNNA2; it reads KNFFVCQVCG…LKIHLDFKHS (85 aa).

Belongs to the krueppel C2H2-type zinc-finger protein family. In terms of assembly, interacts with CTNNA2.

It is found in the nucleus. In terms of biological role, binds DNA and may function as a transcriptional repressor. The sequence is that of Zinc finger protein 639 (Znf639) from Rattus norvegicus (Rat).